The following is a 110-amino-acid chain: Large ribosomal subunit protein uL22 (110 aa).

It belongs to the universal ribosomal protein uL22 family. In terms of assembly, part of the 50S ribosomal subunit.

Its function is as follows. This protein binds specifically to 23S rRNA; its binding is stimulated by other ribosomal proteins, e.g. L4, L17, and L20. It is important during the early stages of 50S assembly. It makes multiple contacts with different domains of the 23S rRNA in the assembled 50S subunit and ribosome. The globular domain of the protein is located near the polypeptide exit tunnel on the outside of the subunit, while an extended beta-hairpin is found that lines the wall of the exit tunnel in the center of the 70S ribosome. The protein is Large ribosomal subunit protein uL22 of Bdellovibrio bacteriovorus (strain ATCC 15356 / DSM 50701 / NCIMB 9529 / HD100).